The following is a 192-amino-acid chain: Ion-translocating oxidoreductase complex subunit A (192 aa).

6 helical membrane-spanning segments follow: residues 5–25, 39–59, 65–85, 102–122, 134–154, and 171–191; these read LLLL…FLGL, IGMS…SYLV, LPFD…AVVV, ALGI…VALL, AIFG…FSAM, and AIAM…TGLV.

Belongs to the NqrDE/RnfAE family. As to quaternary structure, the complex is composed of six subunits: RnfA, RnfB, RnfC, RnfD, RnfE and RnfG.

It localises to the cell inner membrane. Functionally, part of a membrane-bound complex that couples electron transfer with translocation of ions across the membrane. The polypeptide is Ion-translocating oxidoreductase complex subunit A (Shewanella piezotolerans (strain WP3 / JCM 13877)).